The sequence spans 547 residues: Chaperonin GroEL (547 aa).

Residues 30–33 (TLGP), K51, 87–91 (DGTTT), G415, 478–480 (NAA), and D494 contribute to the ATP site.

The protein belongs to the chaperonin (HSP60) family. In terms of assembly, forms a cylinder of 14 subunits composed of two heptameric rings stacked back-to-back. Interacts with the co-chaperonin GroES.

The protein resides in the cytoplasm. It catalyses the reaction ATP + H2O + a folded polypeptide = ADP + phosphate + an unfolded polypeptide.. In terms of biological role, together with its co-chaperonin GroES, plays an essential role in assisting protein folding. The GroEL-GroES system forms a nano-cage that allows encapsulation of the non-native substrate proteins and provides a physical environment optimized to promote and accelerate protein folding. This chain is Chaperonin GroEL, found in Geobacter sp. (strain M21).